We begin with the raw amino-acid sequence, 424 residues long: Gamma-glutamyl phosphate reductase (424 aa).

This sequence belongs to the gamma-glutamyl phosphate reductase family.

It is found in the cytoplasm. It carries out the reaction L-glutamate 5-semialdehyde + phosphate + NADP(+) = L-glutamyl 5-phosphate + NADPH + H(+). It participates in amino-acid biosynthesis; L-proline biosynthesis; L-glutamate 5-semialdehyde from L-glutamate: step 2/2. Catalyzes the NADPH-dependent reduction of L-glutamate 5-phosphate into L-glutamate 5-semialdehyde and phosphate. The product spontaneously undergoes cyclization to form 1-pyrroline-5-carboxylate. The protein is Gamma-glutamyl phosphate reductase of Shewanella woodyi (strain ATCC 51908 / MS32).